The sequence spans 147 residues: 3-dehydroquinate dehydratase (147 aa).

Tyr23 functions as the Proton acceptor in the catalytic mechanism. Substrate contacts are provided by Asn74, His80, and Asp87. His100 functions as the Proton donor in the catalytic mechanism. Substrate contacts are provided by residues 101–102 (LS) and Arg111.

It belongs to the type-II 3-dehydroquinase family. In terms of assembly, homododecamer.

The catalysed reaction is 3-dehydroquinate = 3-dehydroshikimate + H2O. It participates in metabolic intermediate biosynthesis; chorismate biosynthesis; chorismate from D-erythrose 4-phosphate and phosphoenolpyruvate: step 3/7. Functionally, catalyzes a trans-dehydration via an enolate intermediate. The sequence is that of 3-dehydroquinate dehydratase from Clostridium botulinum (strain Kyoto / Type A2).